The chain runs to 365 residues: Neutral protease 2 homolog mep20 (365 aa).

The first 19 residues, 1-19 (MKVTILASAILALINGALA), serve as a signal peptide directing secretion. Residues 20 to 172 (LPANTPTLDV…PQAIKLLDRR (153 aa)) constitute a propeptide that is removed on maturation. N-linked (GlcNAc...) asparagine glycosylation occurs at Asn-73. 2 disulfides stabilise this stretch: Cys-178/Cys-249 and Cys-256/Cys-274. A Zn(2+)-binding site is contributed by His-299. Residue Glu-300 is part of the active site. Positions 303 and 314 each coordinate Zn(2+). Asn-351 carries N-linked (GlcNAc...) asparagine glycosylation.

This sequence belongs to the peptidase M35 family. The cofactor is Zn(2+).

It localises to the secreted. The catalysed reaction is Preferential cleavage of bonds with hydrophobic residues in P1'. Also 3-Asn-|-Gln-4 and 8-Gly-|-Ser-9 bonds in insulin B chain.. Functionally, secreted metalloproteinase that allows assimilation of proteinaceous substrates. Shows high activities on basic nuclear substrates such as histone and protamine. May be involved in virulence. In Aspergillus fumigatus (Neosartorya fumigata), this protein is Neutral protease 2 homolog mep20 (mep20).